A 742-amino-acid polypeptide reads, in one-letter code: Alginate lyase (742 aa).

A signal peptide spans 1-26 (MRLQPLFVSLALAAPCALLPTASLSA). Substrate-binding positions include Arg143, 153–156 (QVLN), Gln204, His208, and 263–266 (YYQR). Residue Tyr264 is the Proton donor of the active site. The Proton acceptor role is filled by His418. Residues His420 and Asp438 each contribute to the Zn(2+) site. A substrate-binding site is contributed by Arg443. His469 serves as a coordination point for Zn(2+). Glu669 lines the substrate pocket.

Belongs to the polysaccharide lyase 17 family. As to quaternary structure, homodimer. Requires Zn(2+) as cofactor.

The protein resides in the periplasm. It carries out the reaction Cleavage of 4-deoxy-alpha-L-erythro-hex-4-enopyranuronoside oligosaccharides into 4-deoxy-alpha-L-erythro-hex-4-enopyranuronate monosaccharides.. Its function is as follows. Polysaccharide lyase that catalyzes the depolymerization of alginate via a beta-elimination mechanism, cleaving the beta-1,4 glycosidic bond between two adjacent sugar residues. Acts specifically on alginate and each of its block structures, with highest activity toward poly-beta-D-mannuronate (poly-ManA). Shows an exolytic mode of action, producing unsaturated monomers. Displays a very low activity against poly-beta-D-glucuronate (poly-GlcA), and is not active on poly-alpha-D-galacturonate, hyaluronan, heparin, heparan sulfate and chondroitin sulfate. The sequence is that of Alginate lyase from Stenotrophomonas maltophilia (strain K279a).